The sequence spans 220 residues: Superoxide dismutase [Cu-Zn], chloroplastic (220 aa).

The transit peptide at 1 to 66 directs the protein to the chloroplast; it reads MAAHCILFSS…AAPKPLTVFA (66 aa). Residues His112, His114, and His129 each contribute to the Cu cation site. Cys123 and Cys212 form a disulfide bridge. Residues His129, His137, His146, and Asp149 each contribute to the Zn(2+) site. His186 is a Cu cation binding site.

It belongs to the Cu-Zn superoxide dismutase family. Homotetramer. The cofactor is Cu cation. Zn(2+) serves as cofactor.

It localises to the plastid. It is found in the chloroplast. It catalyses the reaction 2 superoxide + 2 H(+) = H2O2 + O2. Destroys radicals which are normally produced within the cells and which are toxic to biological systems. The chain is Superoxide dismutase [Cu-Zn], chloroplastic (SODCP) from Solidago canadensis var. scabra (Tall goldenrod).